The sequence spans 179 residues: Methylated-DNA--protein-cysteine methyltransferase (179 aa).

Residue cysteine 130 is the Nucleophile; methyl group acceptor of the active site.

This sequence belongs to the MGMT family.

The protein localises to the cytoplasm. The enzyme catalyses a 6-O-methyl-2'-deoxyguanosine in DNA + L-cysteinyl-[protein] = S-methyl-L-cysteinyl-[protein] + a 2'-deoxyguanosine in DNA. The catalysed reaction is a 4-O-methyl-thymidine in DNA + L-cysteinyl-[protein] = a thymidine in DNA + S-methyl-L-cysteinyl-[protein]. In terms of biological role, involved in the cellular defense against the biological effects of O6-methylguanine (O6-MeG) and O4-methylthymine (O4-MeT) in DNA. Repairs the methylated nucleobase in DNA by stoichiometrically transferring the methyl group to a cysteine residue in the enzyme. This is a suicide reaction: the enzyme is irreversibly inactivated. This is Methylated-DNA--protein-cysteine methyltransferase from Haemophilus influenzae (strain ATCC 51907 / DSM 11121 / KW20 / Rd).